The sequence spans 620 residues: 1-deoxy-D-xylulose-5-phosphate synthase (620 aa).

Residues His80 and 121-123 (GHS) each bind thiamine diphosphate. Residue Asp152 participates in Mg(2+) binding. Thiamine diphosphate contacts are provided by residues 153-154 (GA), Asn181, Tyr288, and Glu370. A Mg(2+)-binding site is contributed by Asn181.

The protein belongs to the transketolase family. DXPS subfamily. As to quaternary structure, homodimer. Mg(2+) is required as a cofactor. It depends on thiamine diphosphate as a cofactor.

It catalyses the reaction D-glyceraldehyde 3-phosphate + pyruvate + H(+) = 1-deoxy-D-xylulose 5-phosphate + CO2. The protein operates within metabolic intermediate biosynthesis; 1-deoxy-D-xylulose 5-phosphate biosynthesis; 1-deoxy-D-xylulose 5-phosphate from D-glyceraldehyde 3-phosphate and pyruvate: step 1/1. In terms of biological role, catalyzes the acyloin condensation reaction between C atoms 2 and 3 of pyruvate and glyceraldehyde 3-phosphate to yield 1-deoxy-D-xylulose-5-phosphate (DXP). The sequence is that of 1-deoxy-D-xylulose-5-phosphate synthase from Escherichia coli (strain SMS-3-5 / SECEC).